The primary structure comprises 337 residues: Major outer membrane protein P.IB (337 aa).

The N-terminal stretch at 1 to 19 (MKKSLIALTLAALPVAAMA) is a signal peptide.

It belongs to the Gram-negative porin family. In terms of assembly, homotrimer.

It localises to the cell outer membrane. Serves as a slightly cation selective porin. In Neisseria lactamica, this protein is Major outer membrane protein P.IB (por).